A 174-amino-acid chain; its full sequence is Frataxin homolog, mitochondrial (174 aa).

The transit peptide at 1–21 (MIKRSLASLVRVSSVMGRRYM) directs the protein to the mitochondrion.

Belongs to the frataxin family. In terms of assembly, monomer. Forms a 24-mer complex made up of 8 copies of a trimeric subcomplex. Increments in mitochondrial iron uptake induce stepwise assembly of species ranging from trimers to 24-mers. Interacts with ISU1 with a 1 to 1 stoichiometry; the interaction is direct. Interacts with YHB1, SDH1, SDH2, AIM45 and CIR1. Processed in two steps by mitochondrial processing peptidase (MPP). MPP first cleaves the precursor to intermediate form and subsequently converts the intermediate to mature size protein.

It is found in the mitochondrion matrix. The catalysed reaction is 4 Fe(2+) + O2 + 4 H(+) = 4 Fe(3+) + 2 H2O. Promotes the biosynthesis of heme as well as the assembly and repair of iron-sulfur clusters by delivering Fe(2+) to proteins involved in these pathways. Plays a role in the protection against iron-catalyzed oxidative stress through its ability to catalyze the oxidation of Fe(2+) to Fe(3+). Can store large amounts of the metal in the form of a ferrihydrite mineral by oligomerization. May be involved in regulation of the mitochondrial electron transport chain. The polypeptide is Frataxin homolog, mitochondrial (Saccharomyces cerevisiae (strain ATCC 204508 / S288c) (Baker's yeast)).